The primary structure comprises 487 residues: Uronate isomerase (487 aa).

It belongs to the metallo-dependent hydrolases superfamily. Uronate isomerase family.

It catalyses the reaction D-glucuronate = D-fructuronate. The catalysed reaction is aldehydo-D-galacturonate = keto-D-tagaturonate. Its pathway is carbohydrate metabolism; pentose and glucuronate interconversion. The chain is Uronate isomerase from Caulobacter vibrioides (strain ATCC 19089 / CIP 103742 / CB 15) (Caulobacter crescentus).